We begin with the raw amino-acid sequence, 338 residues long: MSTLRLLISDSYDPWFNLAVEECIFRQMPATQRVLFLWRNADTVVIGRAQNPWKECNTRRMEEDNVRLARRSSGGGAVFHDLGNTCFTFMAGKPEYDKTISTSIVLNALNALGVSAEASGRNDLVVKTAEGDRKVSGSAYRETKDRGFHHGTLLLNSDLSRLANYLNPDKKKLAAKGITSVRSRVTNLTELLPGITHEQVCEAITEAFFAHYGERVEAEIISPDKTPDLPNFAETFARQSSWEWNFGQAPAFSHLLDERFTWGGVELHFDVEKGHITRAQVFTDSLNPAPLEALAGRLQGCLYRADMLQQECEALLVDFPEQEKELRELSAWMAGAVR.

The region spanning 29–216 is the BPL/LPL catalytic domain; sequence PATQRVLFLW…AFFAHYGERV (188 aa). ATP-binding positions include R71, 76 to 79, and K134; that span reads GAVF. A (R)-lipoate-binding site is contributed by K134.

Belongs to the LplA family. In terms of assembly, monomer.

It is found in the cytoplasm. It catalyses the reaction L-lysyl-[lipoyl-carrier protein] + (R)-lipoate + ATP = N(6)-[(R)-lipoyl]-L-lysyl-[lipoyl-carrier protein] + AMP + diphosphate + H(+). The protein operates within protein modification; protein lipoylation via exogenous pathway; protein N(6)-(lipoyl)lysine from lipoate: step 1/2. It functions in the pathway protein modification; protein lipoylation via exogenous pathway; protein N(6)-(lipoyl)lysine from lipoate: step 2/2. In terms of biological role, catalyzes both the ATP-dependent activation of exogenously supplied lipoate to lipoyl-AMP and the transfer of the activated lipoyl onto the lipoyl domains of lipoate-dependent enzymes. The polypeptide is Lipoate-protein ligase A (Escherichia coli O6:K15:H31 (strain 536 / UPEC)).